A 273-amino-acid polypeptide reads, in one-letter code: Formamidopyrimidine-DNA glycosylase (273 aa).

The active-site Schiff-base intermediate with DNA is the proline 2. Glutamate 3 serves as the catalytic Proton donor. Lysine 58 serves as the catalytic Proton donor; for beta-elimination activity. DNA is bound by residues histidine 92, arginine 111, and lysine 153. An FPG-type zinc finger spans residues 238-272; that stretch reads KVYGREGQSCLSCSSTIIKIKHSGRSTFYCKTCQY. Arginine 262 serves as the catalytic Proton donor; for delta-elimination activity.

It belongs to the FPG family. Monomer. Zn(2+) is required as a cofactor.

It carries out the reaction Hydrolysis of DNA containing ring-opened 7-methylguanine residues, releasing 2,6-diamino-4-hydroxy-5-(N-methyl)formamidopyrimidine.. It catalyses the reaction 2'-deoxyribonucleotide-(2'-deoxyribose 5'-phosphate)-2'-deoxyribonucleotide-DNA = a 3'-end 2'-deoxyribonucleotide-(2,3-dehydro-2,3-deoxyribose 5'-phosphate)-DNA + a 5'-end 5'-phospho-2'-deoxyribonucleoside-DNA + H(+). Involved in base excision repair of DNA damaged by oxidation or by mutagenic agents. Acts as a DNA glycosylase that recognizes and removes damaged bases. Has a preference for oxidized purines, such as 7,8-dihydro-8-oxoguanine (8-oxoG). Has AP (apurinic/apyrimidinic) lyase activity and introduces nicks in the DNA strand. Cleaves the DNA backbone by beta-delta elimination to generate a single-strand break at the site of the removed base with both 3'- and 5'-phosphates. This is Formamidopyrimidine-DNA glycosylase from Rickettsia conorii (strain ATCC VR-613 / Malish 7).